Reading from the N-terminus, the 50-residue chain is Large ribosomal subunit protein bL32c (50 aa).

This sequence belongs to the bacterial ribosomal protein bL32 family.

The protein resides in the plastid. Its subcellular location is the chloroplast. This chain is Large ribosomal subunit protein bL32c, found in Lotus japonicus (Lotus corniculatus var. japonicus).